Consider the following 158-residue polypeptide: Cyclic pyranopterin monophosphate synthase (158 aa).

Residues 76-78 (LCH) and 114-115 (ME) contribute to the substrate site. Asp129 is a catalytic residue.

Belongs to the MoaC family. In terms of assembly, homohexamer; trimer of dimers.

It carries out the reaction (8S)-3',8-cyclo-7,8-dihydroguanosine 5'-triphosphate = cyclic pyranopterin phosphate + diphosphate. Its pathway is cofactor biosynthesis; molybdopterin biosynthesis. Its function is as follows. Catalyzes the conversion of (8S)-3',8-cyclo-7,8-dihydroguanosine 5'-triphosphate to cyclic pyranopterin monophosphate (cPMP). In Shewanella baltica (strain OS223), this protein is Cyclic pyranopterin monophosphate synthase.